The primary structure comprises 586 residues: Kelch-like protein 7 (586 aa).

One can recognise a BTB domain in the interval 44-111 (CDVILMVQER…AYTARISVNS (68 aa)). One can recognise a BACK domain in the interval 146–248 (CLGISVLAEC…SKNFLSKTVQ (103 aa)). 6 Kelch repeats span residues 294–336 (RIAL…FWDN), 337–382 (VVYI…AAEG), 383–430 (KIYT…EANG), 431–481 (LIYV…FVKD), 483–528 (IFAV…AVGS), and 530–575 (VYVL…CVVD).

Homodimer. Component of the BCR(KLHL7) E3 ubiquitin ligase complex, at least composed of CUL3 and KLHL7 and RBX1. As to expression, widely expressed, with highest levels in adult and fetal heart, CNS and adult testis.

Its subcellular location is the nucleus. The protein resides in the cytoplasm. Its pathway is protein modification; protein ubiquitination. Substrate-specific adapter of a BCR (BTB-CUL3-RBX1) E3 ubiquitin ligase complex. The BCR(KLHL7) complex acts by mediating ubiquitination and subsequent degradation of substrate proteins. Probably mediates 'Lys-48'-linked ubiquitination. The sequence is that of Kelch-like protein 7 (KLHL7) from Homo sapiens (Human).